Here is a 173-residue protein sequence, read N- to C-terminus: Probable capsid assembly scaffolding protein (173 aa).

Residues 1–13 (MSDNPTPESTPEA) are compositionally biased toward low complexity. The disordered stretch occupies residues 1 to 27 (MSDNPTPESTPEAETPEVEKPMEPQGK). Residues 36-84 (SLRQEAAAARVAKKDAVEAAEARVKAEYEAKLAERDTAYTELQNQLGQA) are a coiled coil. Residues 134-158 (GNKTPSPAFDPSQGRGGKPPIPLNG) are disordered.

Belongs to the L5likevirus scaffolding protein family.

Scaffolding protein involved in the icosahedric procapsid assembly. Coassembles with the capsid proteins to form the procapsid, in which the scaffolding protein is found within the external shell of icosahedrally arranged capsid protein subunits. This Mycobacterium (Mycobacteriophage L5) protein is Probable capsid assembly scaffolding protein (16).